The sequence spans 90 residues: Small ribosomal subunit protein bS16 (90 aa).

It belongs to the bacterial ribosomal protein bS16 family.

This chain is Small ribosomal subunit protein bS16, found in Fervidobacterium nodosum (strain ATCC 35602 / DSM 5306 / Rt17-B1).